A 201-amino-acid polypeptide reads, in one-letter code: Imidazoleglycerol-phosphate dehydratase (201 aa).

This sequence belongs to the imidazoleglycerol-phosphate dehydratase family.

The protein resides in the cytoplasm. It catalyses the reaction D-erythro-1-(imidazol-4-yl)glycerol 3-phosphate = 3-(imidazol-4-yl)-2-oxopropyl phosphate + H2O. It participates in amino-acid biosynthesis; L-histidine biosynthesis; L-histidine from 5-phospho-alpha-D-ribose 1-diphosphate: step 6/9. This is Imidazoleglycerol-phosphate dehydratase from Prochlorococcus marinus (strain AS9601).